Here is a 64-residue protein sequence, read N- to C-terminus: Photosystem II reaction center protein J (64 aa).

Residues 35–55 form a helical membrane-spanning segment; the sequence is LWLVATAGGIAVIFVLGIFFY.

Belongs to the PsbJ family. As to quaternary structure, PSII is composed of 1 copy each of membrane proteins PsbA, PsbB, PsbC, PsbD, PsbE, PsbF, PsbH, PsbI, PsbJ, PsbK, PsbL, PsbM, PsbT, PsbX, PsbY, Psb30/Ycf12, peripheral proteins PsbO, CyanoQ (PsbQ), PsbU, PsbV and a large number of cofactors. It forms dimeric complexes.

The protein localises to the cellular thylakoid membrane. Functionally, one of the components of the core complex of photosystem II (PSII). PSII is a light-driven water:plastoquinone oxidoreductase that uses light energy to abstract electrons from H(2)O, generating O(2) and a proton gradient subsequently used for ATP formation. It consists of a core antenna complex that captures photons, and an electron transfer chain that converts photonic excitation into a charge separation. The chain is Photosystem II reaction center protein J from Prochlorococcus marinus (strain MIT 9515).